Here is a 209-residue protein sequence, read N- to C-terminus: Large ribosomal subunit protein uL3 (209 aa).

A disordered region spans residues 118–151 (GFQGAIKRHGQSRGPMSHGSRYHRRPGSMGPVAP).

It belongs to the universal ribosomal protein uL3 family. Part of the 50S ribosomal subunit. Forms a cluster with proteins L14 and L19.

In terms of biological role, one of the primary rRNA binding proteins, it binds directly near the 3'-end of the 23S rRNA, where it nucleates assembly of the 50S subunit. The protein is Large ribosomal subunit protein uL3 of Enterococcus faecalis (strain ATCC 700802 / V583).